The following is a 565-amino-acid chain: Arginine--tRNA ligase (565 aa).

The short motif at 126–136 (ANPTGPLHIGH) is the 'HIGH' region element.

This sequence belongs to the class-I aminoacyl-tRNA synthetase family. As to quaternary structure, monomer.

The protein localises to the cytoplasm. The catalysed reaction is tRNA(Arg) + L-arginine + ATP = L-arginyl-tRNA(Arg) + AMP + diphosphate. This chain is Arginine--tRNA ligase, found in Wolbachia sp. subsp. Brugia malayi (strain TRS).